A 638-amino-acid chain; its full sequence is DNA mismatch repair protein MutL (638 aa).

Residues 398–435 (GREGTSFGTQTNAFGSMATPRDNSRGSYSAGESRQRTE) are disordered.

It belongs to the DNA mismatch repair MutL/HexB family.

Its function is as follows. This protein is involved in the repair of mismatches in DNA. It is required for dam-dependent methyl-directed DNA mismatch repair. May act as a 'molecular matchmaker', a protein that promotes the formation of a stable complex between two or more DNA-binding proteins in an ATP-dependent manner without itself being part of a final effector complex. This chain is DNA mismatch repair protein MutL, found in Shewanella baltica (strain OS155 / ATCC BAA-1091).